The following is a 427-amino-acid chain: MSSAPTDAFFRTPLSERDPEVFAAITQELKRQQDQIELIASENIVSRAVLEAQGSVMTNKYAEGYPGKRYYGGCEFVDIAESLAISRACQIFGCSYANVQPSSGSQANQGVFMALLQPGDTIMGMSLAAGGHLTHGAAPNQSGKWFKAVQYGVRQQDSQIDFAEVEELARTHRPKLIIAGGSAYPRTIDFARFRKIADEVGAFFMVDMAHFAGLVAGGVYPNPLPHAHVVTTTTHKTLRGPRGGMILSNDADIGKKINSAIFPGIQGGPLMHVIAGKAVAFGEALKPEFKLYAKQVVDNARALADTLVRRGLDIVSGGTDSHLMLVDLRPKKLTGKAAEASLEHAGMTCNKNGIPFDPEKPTITSGVRLGTPAATTRGFGVEEFKKVGELIGDVLDGLAANPEDNSAAEARARAEVAELCRRFPIYQ.

(6S)-5,6,7,8-tetrahydrofolate-binding positions include Leu127 and 131–133; that span reads GHL. Lys236 is modified (N6-(pyridoxal phosphate)lysine).

The protein belongs to the SHMT family. In terms of assembly, homodimer. Pyridoxal 5'-phosphate serves as cofactor.

The protein localises to the cytoplasm. It carries out the reaction (6R)-5,10-methylene-5,6,7,8-tetrahydrofolate + glycine + H2O = (6S)-5,6,7,8-tetrahydrofolate + L-serine. The protein operates within one-carbon metabolism; tetrahydrofolate interconversion. It functions in the pathway amino-acid biosynthesis; glycine biosynthesis; glycine from L-serine: step 1/1. Catalyzes the reversible interconversion of serine and glycine with tetrahydrofolate (THF) serving as the one-carbon carrier. This reaction serves as the major source of one-carbon groups required for the biosynthesis of purines, thymidylate, methionine, and other important biomolecules. Also exhibits THF-independent aldolase activity toward beta-hydroxyamino acids, producing glycine and aldehydes, via a retro-aldol mechanism. This is Serine hydroxymethyltransferase from Paramagnetospirillum magneticum (strain ATCC 700264 / AMB-1) (Magnetospirillum magneticum).